The following is a 310-amino-acid chain: Light-independent protochlorophyllide reductase iron-sulfur ATP-binding protein (310 aa).

Residues 53–58 (GIGKST) and lysine 82 each bind ATP. Residue serine 57 coordinates Mg(2+). Cysteine 138 and cysteine 172 together coordinate [4Fe-4S] cluster. Residues 223-224 (NR) and 247-249 (PAL) each bind ATP.

This sequence belongs to the NifH/BchL/ChlL family. Homodimer. Protochlorophyllide reductase is composed of three subunits; BchL, BchN and BchB. It depends on [4Fe-4S] cluster as a cofactor.

The enzyme catalyses chlorophyllide a + oxidized 2[4Fe-4S]-[ferredoxin] + 2 ADP + 2 phosphate = protochlorophyllide a + reduced 2[4Fe-4S]-[ferredoxin] + 2 ATP + 2 H2O. It functions in the pathway porphyrin-containing compound metabolism; bacteriochlorophyll biosynthesis (light-independent). In terms of biological role, component of the dark-operative protochlorophyllide reductase (DPOR) that uses Mg-ATP and reduced ferredoxin to reduce ring D of protochlorophyllide (Pchlide) to form chlorophyllide a (Chlide). This reaction is light-independent. The L component serves as a unique electron donor to the NB-component of the complex, and binds Mg-ATP. This chain is Light-independent protochlorophyllide reductase iron-sulfur ATP-binding protein, found in Rhodopseudomonas palustris (strain BisA53).